Here is a 329-residue protein sequence, read N- to C-terminus: uncharacterized protein (329 aa).

The stretch at 56 to 247 (LNKEEQFQED…EAEKTHQAKL (192 aa)) forms a coiled coil.

This is an uncharacterized protein from Bos taurus (Bovine).